Consider the following 218-residue polypeptide: Small ribosomal subunit protein uS3c (218 aa).

Residues 47–118 (VQKNMRTSSG…KLNIAVTRIA (72 aa)) enclose the KH type-2 domain.

Belongs to the universal ribosomal protein uS3 family. Part of the 30S ribosomal subunit.

The protein resides in the plastid. It is found in the chloroplast. This chain is Small ribosomal subunit protein uS3c (rps3), found in Solanum lycopersicum (Tomato).